Here is a 391-residue protein sequence, read N- to C-terminus: MTQVSNRETPRGVAVLSRFLASESAGGIVLMAAALAALIVANSSLSASYFSILHSVWLGLSVELWINDGLMAIFFLMVGLEIKREVLAGGLATWGQRALPGFAAAGGMLVPALIYIAINWGNPQTLSGWAIPAATDIAFALGVLSLLGNRVPTSLKVFLAALAILDDLGAVTIIAFFYSSGLNLPMLAAAFATLAVLIALNRLNVRRLLPYLLLGALLWFFVLQSGVHATLAGVALALCIPMGKPEEEARSPLLFLEEKMHYWVAFAVVPIFGFANAGVSLSGITLANLIDPVPMGVALGLFVGKQIGVFLAAVLAIRAGLATLPENSNWVQLYGVAILCGIGFTMSLFIGNLAFPGSQHLIDEVKVGVLIGSGLAAIAGILLLRTRFSRH.

11 consecutive transmembrane segments (helical) span residues 19–39, 56–76, 98–118, 128–148, 157–177, 180–200, 208–228, 264–284, 297–317, 335–355, and 364–384; these read FLAS…AALI, VWLG…IFFL, ALPG…YIAI, GWAI…SLLG, VFLA…IAFF, SGLN…LIAL, LLPY…SGVH, VAFA…LSGI, VALG…VLAI, GVAI…NLAF, and EVKV…ILLL.

The protein belongs to the NhaA Na(+)/H(+) (TC 2.A.33) antiporter family.

Its subcellular location is the cell inner membrane. The enzyme catalyses Na(+)(in) + 2 H(+)(out) = Na(+)(out) + 2 H(+)(in). Functionally, na(+)/H(+) antiporter that extrudes sodium in exchange for external protons. This Pseudomonas savastanoi pv. phaseolicola (strain 1448A / Race 6) (Pseudomonas syringae pv. phaseolicola (strain 1448A / Race 6)) protein is Na(+)/H(+) antiporter NhaA 1.